The following is a 24-amino-acid chain: Alpha-lactalbumin (24 aa).

This sequence belongs to the glycosyl hydrolase 22 family. As to quaternary structure, lactose synthase (LS) is a heterodimer of a catalytic component, beta1,4-galactosyltransferase (beta4Gal-T1) and a regulatory component, alpha-lactalbumin (LA). Post-translationally, glycosylated (50% of the proteins). In terms of tissue distribution, mammary gland specific. Secreted in milk.

The protein localises to the secreted. Its function is as follows. Regulatory subunit of lactose synthase, changes the substrate specificity of galactosyltransferase in the mammary gland making glucose a good acceptor substrate for this enzyme. This enables LS to synthesize lactose, the major carbohydrate component of milk. In other tissues, galactosyltransferase transfers galactose onto the N-acetylglucosamine of the oligosaccharide chains in glycoproteins. The sequence is that of Alpha-lactalbumin (LALBA) from Felis catus (Cat).